We begin with the raw amino-acid sequence, 305 residues long: Methionyl-tRNA formyltransferase (305 aa).

108–111 (SLLP) contacts (6S)-5,6,7,8-tetrahydrofolate.

This sequence belongs to the Fmt family.

The enzyme catalyses L-methionyl-tRNA(fMet) + (6R)-10-formyltetrahydrofolate = N-formyl-L-methionyl-tRNA(fMet) + (6S)-5,6,7,8-tetrahydrofolate + H(+). Its function is as follows. Attaches a formyl group to the free amino group of methionyl-tRNA(fMet). The formyl group appears to play a dual role in the initiator identity of N-formylmethionyl-tRNA by promoting its recognition by IF2 and preventing the misappropriation of this tRNA by the elongation apparatus. The protein is Methionyl-tRNA formyltransferase of Clavibacter michiganensis subsp. michiganensis (strain NCPPB 382).